Reading from the N-terminus, the 295-residue chain is Polyadenylate-binding protein 2-B (295 aa).

The interval 1 to 102 (MAAVSSVASL…EEPGELTGDQ (102 aa)) is disordered. Gly residues-rich tracts occupy residues 19-31 (LRGG…GGQD) and 71-81 (GRGGSGGGAGG). The segment covering 83–96 (EELEDEELEEEEPG) has biased composition (acidic residues). A coiled-coil region spans residues 106-140 (DPELEAIKARVREMEEEAEKLKELQNEVEKQMNMS). Residues 145–295 (NAGPVIMSVE…ARATSWYTPY (151 aa)) form a necessary for homooligomerization region. Residues 162 to 239 (RSIYVGNVDY…RQIKVVPKRT (78 aa)) enclose the RRM domain.

Monomer and homooligomer. Binds RNA as a monomer and oligomerizes when bound to poly(A).

It localises to the nucleus. The protein resides in the cytoplasm. Its function is as follows. Involved in the 3'-end formation of mRNA precursors (pre-mRNA) by the addition of a poly(A) tail of 200-250 nt to the upstream cleavage product. Stimulates poly(A) polymerase (PAPOLA) conferring processivity on the poly(A) tail elongation reaction and also controls the poly(A) tail length. Increases the affinity of poly(A) polymerase for RNA. Binds to poly(A) and to poly(G) with high affinity. May protect the poly(A) tail from degradation. The chain is Polyadenylate-binding protein 2-B (pabpn1-b) from Xenopus laevis (African clawed frog).